A 182-amino-acid polypeptide reads, in one-letter code: ATP synthase subunit delta (182 aa).

This sequence belongs to the ATPase delta chain family. As to quaternary structure, F-type ATPases have 2 components, F(1) - the catalytic core - and F(0) - the membrane proton channel. F(1) has five subunits: alpha(3), beta(3), gamma(1), delta(1), epsilon(1). F(0) has three main subunits: a(1), b(2) and c(10-14). The alpha and beta chains form an alternating ring which encloses part of the gamma chain. F(1) is attached to F(0) by a central stalk formed by the gamma and epsilon chains, while a peripheral stalk is formed by the delta and b chains.

The protein resides in the cell inner membrane. Its function is as follows. F(1)F(0) ATP synthase produces ATP from ADP in the presence of a proton or sodium gradient. F-type ATPases consist of two structural domains, F(1) containing the extramembraneous catalytic core and F(0) containing the membrane proton channel, linked together by a central stalk and a peripheral stalk. During catalysis, ATP synthesis in the catalytic domain of F(1) is coupled via a rotary mechanism of the central stalk subunits to proton translocation. This protein is part of the stalk that links CF(0) to CF(1). It either transmits conformational changes from CF(0) to CF(1) or is implicated in proton conduction. The protein is ATP synthase subunit delta of Sulfurihydrogenibium azorense (strain DSM 15241 / OCM 825 / Az-Fu1).